The chain runs to 443 residues: Mitochondrial enolase superfamily member 1 (443 aa).

Substrate contacts are provided by residues 24–26 (GAD) and Tyr-34. At Ser-148 the chain carries Phosphoserine. Position 220 (Lys-220) interacts with substrate. The active-site Proton donor/acceptor is the Lys-222. Mg(2+) is bound at residue Asp-250. Substrate is bound by residues Asn-252, Glu-276, Glu-305, 355–357 (HAG), and Glu-386. 2 residues coordinate Mg(2+): Glu-276 and Glu-305. His-355 is a catalytic residue.

This sequence belongs to the mandelate racemase/muconate lactonizing enzyme family. ENOSF1 subfamily. Mg(2+) serves as cofactor. In terms of processing, could be sumoylated.

It is found in the mitochondrion. The catalysed reaction is L-fuconate = 2-dehydro-3-deoxy-L-fuconate + H2O. In terms of biological role, plays a role in the catabolism of L-fucose, a sugar that is part of the carbohydrates that are attached to cellular glycoproteins. Catalyzes the dehydration of L-fuconate to 2-keto-3-deoxy-L-fuconate by the abstraction of the 2-proton to generate an enediolate intermediate that is stabilized by the magnesium ion. The polypeptide is Mitochondrial enolase superfamily member 1 (ENOSF1) (Homo sapiens (Human)).